Consider the following 393-residue polypeptide: Translation initiation factor eIF2B subunit beta (393 aa).

Positions 105-125 (VSSSNSSSPSQKRDIPSNEKL) are disordered. Phosphoserine occurs at positions 106, 108, and 112.

This sequence belongs to the eIF-2B alpha/beta/delta subunits family. As to quaternary structure, component of the translation initiation factor 2B (eIF2B) complex which is a heterodecamer of two sets of five different subunits: alpha, beta, gamma, delta and epsilon. Subunits alpha, beta and delta comprise a regulatory subcomplex and subunits epsilon and gamma comprise a catalytic subcomplex. Within the complex, the hexameric regulatory complex resides at the center, with the two heterodimeric catalytic subcomplexes bound on opposite sides.

It is found in the cytoplasm. It localises to the cytosol. Functionally, acts as a component of the translation initiation factor 2B (eIF2B) complex, which catalyzes the exchange of GDP for GTP on the eukaryotic initiation factor 2 (eIF2) complex gamma subunit. Its guanine nucleotide exchange factor activity is repressed when bound to eIF2 complex phosphorylated on the alpha subunit, thereby limiting the amount of methionyl-initiator methionine tRNA available to the ribosome and consequently global translation is repressed. This Schizosaccharomyces pombe (strain 972 / ATCC 24843) (Fission yeast) protein is Translation initiation factor eIF2B subunit beta (tif222).